A 371-amino-acid chain; its full sequence is Queuine tRNA-ribosyltransferase (371 aa).

The Proton acceptor role is filled by Asp93. Substrate-binding positions include 93–97, Asp147, Gln191, and Gly218; that span reads DSGGF. The interval 249-255 is RNA binding; it reads GVGTVVD. The Nucleophile role is filled by Asp268. Positions 273-277 are RNA binding; important for wobble base 34 recognition; sequence TRNAR. Residues Cys306, Cys308, Cys311, and His337 each coordinate Zn(2+).

Belongs to the queuine tRNA-ribosyltransferase family. In terms of assembly, homodimer. Within each dimer, one monomer is responsible for RNA recognition and catalysis, while the other monomer binds to the replacement base PreQ1. Requires Zn(2+) as cofactor.

It catalyses the reaction 7-aminomethyl-7-carbaguanine + guanosine(34) in tRNA = 7-aminomethyl-7-carbaguanosine(34) in tRNA + guanine. The protein operates within tRNA modification; tRNA-queuosine biosynthesis. In terms of biological role, catalyzes the base-exchange of a guanine (G) residue with the queuine precursor 7-aminomethyl-7-deazaguanine (PreQ1) at position 34 (anticodon wobble position) in tRNAs with GU(N) anticodons (tRNA-Asp, -Asn, -His and -Tyr). Catalysis occurs through a double-displacement mechanism. The nucleophile active site attacks the C1' of nucleotide 34 to detach the guanine base from the RNA, forming a covalent enzyme-RNA intermediate. The proton acceptor active site deprotonates the incoming PreQ1, allowing a nucleophilic attack on the C1' of the ribose to form the product. After dissociation, two additional enzymatic reactions on the tRNA convert PreQ1 to queuine (Q), resulting in the hypermodified nucleoside queuosine (7-(((4,5-cis-dihydroxy-2-cyclopenten-1-yl)amino)methyl)-7-deazaguanosine). The sequence is that of Queuine tRNA-ribosyltransferase from Leptospira biflexa serovar Patoc (strain Patoc 1 / Ames).